We begin with the raw amino-acid sequence, 344 residues long: L-rhamnose-proton symporter (344 aa).

Helical transmembrane passes span 4–24, 38–58, 72–92, 101–121, 131–151, 175–195, 214–234, 259–279, 290–310, and 323–343; these read AITMGIFWHLIGAASAACFYA, WSVGGIVSWLILPWAISATLL, TLLPVFLFGAMWGIGNINYGL, MGIGIAIGITLIVGTLMTPII, TQGGQMTLLGVLVAVIGVGIV, LLLAVMCGIFSAGMSFAMNAA, LPSYVVIMGGGALVNLGFCFI, LLLSALGGLMWYLQFFFYAWG, MSWMLHMSFYVLCGGLVGLVL, and VLSLGCVVIIIAANIVGLGMA.

The protein belongs to the L-rhamnose transporter (TC 2.A.7.6) family.

It localises to the cell inner membrane. It carries out the reaction L-rhamnopyranose(in) + H(+)(in) = L-rhamnopyranose(out) + H(+)(out). In terms of biological role, uptake of L-rhamnose across the cytoplasmic membrane with the concomitant transport of protons into the cell (symport system). This Klebsiella pneumoniae (strain 342) protein is L-rhamnose-proton symporter.